The chain runs to 429 residues: Putative GMP synthase [glutamine-hydrolyzing] (429 aa).

The 109-residue stretch at Thr-10 to Cys-118 folds into the Glutamine amidotransferase type-1 domain. Cys-87 serves as the catalytic Nucleophile. The region spanning Glu-119–Arg-304 is the GMPS ATP-PPase domain. Catalysis depends on residues His-176 and Glu-178.

As to quaternary structure, homodimer.

The enzyme catalyses XMP + L-glutamine + ATP + H2O = GMP + L-glutamate + AMP + diphosphate + 2 H(+). Its pathway is purine metabolism; GMP biosynthesis; GMP from XMP (L-Gln route): step 1/1. Catalyzes the synthesis of GMP from XMP. The protein is Putative GMP synthase [glutamine-hydrolyzing] (guaA) of Chlamydia pneumoniae (Chlamydophila pneumoniae).